The sequence spans 402 residues: MIDPAYRKKMVVVEGSYAVAHSAKVCRPNVISAYPITPQTHIVEHLSQFMADGEIPNCEYVNVEAEFSAISALIGASAVGARTYSATTSQGLLLMHEALFNTSGMRLPVVMTVANRAVSAPINIWNDHQDAIAQRDTGWMQLYVEDVQEACDTLPQLYKIAEDNEIMVPGMVCMDGFILSHVYEPVVLLEQDLTDNFLPPFQPEDILDPEDPKTFGAFASPDTYEEFRYLHEQAMQKALPKIEATAKEFEEVYGRYHGGLIDGYMLDDAEIVVMAMGSILGTVKDVVDKYRAKGEKIGVLKVRSFRPFPKEQICKAVKNAHAVVVLDKNISIGTNEGALFTETKSCLYNSKVRVPVIGYTIGHGGRDIPVESIAKVIEETKKVAKSGITIESQFMDLKEELL.

In terms of assembly, heterotetramer of one alpha, one beta, one delta and one gamma chain.

The enzyme catalyses 2 oxidized [2Fe-2S]-[ferredoxin] + pyruvate + CoA = 2 reduced [2Fe-2S]-[ferredoxin] + acetyl-CoA + CO2 + H(+). The polypeptide is Pyruvate synthase subunit PorA (porA) (Methanosarcina barkeri (strain Fusaro / DSM 804)).